The sequence spans 132 residues: UPF0102 protein Achl_2213 (132 aa).

The protein belongs to the UPF0102 family.

The protein is UPF0102 protein Achl_2213 of Pseudarthrobacter chlorophenolicus (strain ATCC 700700 / DSM 12829 / CIP 107037 / JCM 12360 / KCTC 9906 / NCIMB 13794 / A6) (Arthrobacter chlorophenolicus).